The chain runs to 355 residues: Aromatic amino acid aminotransferase (355 aa).

Lysine 217 bears the N6-(pyridoxal phosphate)lysine mark.

It belongs to the class-II pyridoxal-phosphate-dependent aminotransferase family. Homodimer. It depends on pyridoxal 5'-phosphate as a cofactor.

It catalyses the reaction an aromatic L-alpha-amino acid + 2-oxoglutarate = an aromatic oxo-acid + L-glutamate. Its function is as follows. Aminotransferase that catalyzes the conversion of aromatic amino acids and 2-oxoglutarate into corresponding aromatic oxo acids and L-glutamate. This Mycolicibacterium paratuberculosis (strain ATCC BAA-968 / K-10) (Mycobacterium paratuberculosis) protein is Aromatic amino acid aminotransferase.